A 31-amino-acid chain; its full sequence is Cliotide T14 (31 aa).

The segment at residues 1-31 is a cross-link (cyclopeptide (Asp-Asn)); that stretch reads DTIPCGESCVWIPCISSILGCSCKDKVCYHN. 3 cysteine pairs are disulfide-bonded: Cys5–Cys21, Cys9–Cys23, and Cys14–Cys28.

Post-translationally, contains 3 disulfide bonds. This is a cyclic peptide. Expressed in seed but not in root nodules.

Functionally, probably participates in a plant defense mechanism. Not active against Gram-negative bacterium E.coli ATCC 700926 or Gram-positive bacterium S.aureus ATCC 12600 up to a concentration of 100 uM under low-salt conditions. This Clitoria ternatea (Butterfly pea) protein is Cliotide T14.